A 451-amino-acid polypeptide reads, in one-letter code: UPF0210 protein CLH_1879 (451 aa).

The protein belongs to the UPF0210 family. As to quaternary structure, homodimer.

The polypeptide is UPF0210 protein CLH_1879 (Clostridium botulinum (strain Alaska E43 / Type E3)).